The sequence spans 401 residues: Imidazolonepropionase (401 aa).

Fe(3+) is bound by residues histidine 66 and histidine 68. Positions 66 and 68 each coordinate Zn(2+). 4-imidazolone-5-propanoate is bound by residues arginine 75, tyrosine 138, and histidine 171. Residue tyrosine 138 participates in N-formimidoyl-L-glutamate binding. Histidine 236 is a Fe(3+) binding site. Histidine 236 lines the Zn(2+) pocket. Residue glutamine 239 coordinates 4-imidazolone-5-propanoate. Residue aspartate 311 participates in Fe(3+) binding. Aspartate 311 contributes to the Zn(2+) binding site. Residues asparagine 313 and glycine 315 each coordinate N-formimidoyl-L-glutamate. Threonine 316 lines the 4-imidazolone-5-propanoate pocket.

This sequence belongs to the metallo-dependent hydrolases superfamily. HutI family. Zn(2+) is required as a cofactor. It depends on Fe(3+) as a cofactor.

It localises to the cytoplasm. The enzyme catalyses 4-imidazolone-5-propanoate + H2O = N-formimidoyl-L-glutamate. It functions in the pathway amino-acid degradation; L-histidine degradation into L-glutamate; N-formimidoyl-L-glutamate from L-histidine: step 3/3. Functionally, catalyzes the hydrolytic cleavage of the carbon-nitrogen bond in imidazolone-5-propanoate to yield N-formimidoyl-L-glutamate. It is the third step in the universal histidine degradation pathway. This chain is Imidazolonepropionase, found in Pseudomonas entomophila (strain L48).